Consider the following 183-residue polypeptide: Probable chorismate pyruvate-lyase 2 (183 aa).

Arg76, Leu114, and Glu166 together coordinate substrate.

This sequence belongs to the UbiC family.

The protein resides in the cytoplasm. It carries out the reaction chorismate = 4-hydroxybenzoate + pyruvate. Its pathway is cofactor biosynthesis; ubiquinone biosynthesis. Functionally, removes the pyruvyl group from chorismate, with concomitant aromatization of the ring, to provide 4-hydroxybenzoate (4HB) for the ubiquinone pathway. The sequence is that of Probable chorismate pyruvate-lyase 2 from Pseudomonas fluorescens (strain Pf0-1).